Reading from the N-terminus, the 356-residue chain is Tricetin 3',4',5'-O-trimethyltransferase (356 aa).

Residue 123–129 (MNQDKVL) coordinates substrate. The interval 155–173 (AFEYHGTDPRFNRVFNEGM) is substrate binding. S-adenosyl-L-methionine contacts are provided by glycine 201, aspartate 224, aspartate 244, methionine 245, and lysine 258. The active-site Proton acceptor is histidine 262.

The protein belongs to the class I-like SAM-binding methyltransferase superfamily. Cation-independent O-methyltransferase family. COMT subfamily. In terms of assembly, homodimer. The monomer is fully active and dimerization is not required for sequential methylation. As to expression, expressed in roots, stems and leaves.

It carries out the reaction tricetin + 3 S-adenosyl-L-methionine = 3',4',5'-O-trimethyltricetin + 3 S-adenosyl-L-homocysteine + 3 H(+). Flavonoid B-ring-specific O-methyltransferase with a preference for flavones &gt; dihydroflavones &gt; flavonols that possess at least two B-ring hydroxyl groups. Active with tricetin, 5-hydroxyferulic acid, luteolin, quercitin, eriodictyol, quercetagetin, taxifolin, gossypetin and myricetin. No activity with naringenin, apigenin, kaempferol, 7,8-dihydroxy- or 5,7,8-trihydroxy flavones, chlorogenic acid, gallic acid or daphnetin. Catalyzes the sequential O-methylation of tricetin via 3'-O-methyltricetin, 3',5'-O-methyltricetin to 3',4',5'-O-trimethyltricetin. May also be involved in S lignin biosynthesis. The protein is Tricetin 3',4',5'-O-trimethyltransferase (OMT2) of Triticum aestivum (Wheat).